A 525-amino-acid polypeptide reads, in one-letter code: Probable protein kinase UbiB (525 aa).

The Protein kinase domain maps to 118–500; sequence DFERVPVASA…QKRTNRLLQG (383 aa). Residues 124-132 and K150 each bind ATP; that span reads VASASIAQV. D285 serves as the catalytic Proton acceptor. The chain crosses the membrane as a helical span at residues 501 to 521; that stretch reads LLLFGVAVGVGAVLARAFLAL.

It belongs to the ABC1 family. UbiB subfamily.

The protein localises to the cell inner membrane. The protein operates within cofactor biosynthesis; ubiquinone biosynthesis [regulation]. In terms of biological role, is probably a protein kinase regulator of UbiI activity which is involved in aerobic coenzyme Q (ubiquinone) biosynthesis. The polypeptide is Probable protein kinase UbiB (Paraburkholderia phytofirmans (strain DSM 17436 / LMG 22146 / PsJN) (Burkholderia phytofirmans)).